Reading from the N-terminus, the 445-residue chain is Phosphoglucosamine mutase (445 aa).

Serine 102 serves as the catalytic Phosphoserine intermediate. Mg(2+) is bound by residues serine 102, aspartate 241, aspartate 243, and aspartate 245. Serine 102 bears the Phosphoserine mark.

It belongs to the phosphohexose mutase family. It depends on Mg(2+) as a cofactor. In terms of processing, activated by phosphorylation.

The catalysed reaction is alpha-D-glucosamine 1-phosphate = D-glucosamine 6-phosphate. In terms of biological role, catalyzes the conversion of glucosamine-6-phosphate to glucosamine-1-phosphate. The chain is Phosphoglucosamine mutase from Shewanella piezotolerans (strain WP3 / JCM 13877).